The sequence spans 897 residues: DNA endonuclease RBBP8 (897 aa).

The essential for binding to the MRN complex and for RPA focus formation on DNA damage stretch occupies residues 22-45; sequence DLWTKLKECHDREVQGLQVKVTKL. A coiled-coil region spans residues 35-84; sequence VQGLQVKVTKLKQERILDAQRLEEFFTKNQQLREQQKVLHETIKVLEDRL. Positions 45 to 160 are required for interaction with LMO4, probably by stabilizing the interaction through RPPB8 dimerization; it reads LKQERILDAQ…AELECEEDVI (116 aa). Residues Lys62 and Lys115 each participate in a glycyl lysine isopeptide (Lys-Gly) (interchain with G-Cter in SUMO2) cross-link. Positions 117-138 form a coiled coil; the sequence is ITELMNERNTLQEENKKLSEQL. A Glycyl lysine isopeptide (Lys-Gly) (interchain with G-Cter in SUMO2) cross-link involves residue Lys193. Phosphoserine occurs at positions 233 and 276. Basic and acidic residues predominate over residues 292–307; it reads KQPFEESTRNTEDSLR. The interval 292 to 325 is disordered; it reads KQPFEESTRNTEDSLRFSDSTSKTPPQEELPTRV. Phosphothreonine; by CDK2 is present on Thr315. Phosphoserine occurs at positions 326, 327, and 349. Residues Lys360 and Lys378 each participate in a glycyl lysine isopeptide (Lys-Gly) (interchain with G-Cter in SUMO2) cross-link. The residue at position 379 (Ser379) is a Phosphoserine. Glycyl lysine isopeptide (Lys-Gly) (interchain with G-Cter in SUMO2) cross-links involve residues Lys396, Lys404, and Lys410. Residues 419–464 form a disordered region; that stretch reads QNRTEYGKDSNTDKHLEPLKSLGGRTSKRKKTEEESEHEVSCPQAS. The span at 420–436 shows a compositional bias: basic and acidic residues; the sequence is NRTEYGKDSNTDKHLEP. Glycyl lysine isopeptide (Lys-Gly) (interchain with G-Cter in SUMO2) cross-links involve residues Lys438 and Lys449. Positions 490 to 494 match the PXDLS motif motif; it reads PLDLS. The tract at residues 509-557 is damage-recruitment motif; that stretch reads SETSKNKFRQVTLYEALKTIPKGFSSSRKASDGNCTLPKDSPGEPCSQE. Lys526 participates in a covalent cross-link: Glycyl lysine isopeptide (Lys-Gly) (interchain with G-Cter in SUMO2); alternate. Residues Lys530, Lys572, and Lys578 each participate in a glycyl lysine isopeptide (Lys-Gly) (interchain with G-Cter in SUMO2) cross-link. A Glycyl lysine isopeptide (Lys-Gly) (interchain with G-Cter in SUMO2); alternate cross-link involves residue Lys604. Glycyl lysine isopeptide (Lys-Gly) (interchain with G-Cter in SUMO2) cross-links involve residues Lys613, Lys638, and Lys640. The required for interaction with LMO4, probably by making physical contact with LMO4 stretch occupies residues 641 to 685; it reads SLQNNQDVSFENIQWSIDPGADLSQYKMDVTVIDTKDGSQSKLGG. Position 664 is a phosphoserine; by ATM (Ser664). A Glycyl lysine isopeptide (Lys-Gly) (interchain with G-Cter in SUMO2) cross-link involves residue Lys676. Ser679 is modified (phosphoserine). The segment at 704–723 is disordered; the sequence is KKQEQKGEKSSNEERKMNDS. Lys719 is covalently cross-linked (Glycyl lysine isopeptide (Lys-Gly) (interchain with G-Cter in SUMO2)). Ser723 is subject to Phosphoserine. Ser745 is modified (phosphoserine; by ATM). Residue Lys782 forms a Glycyl lysine isopeptide (Lys-Gly) (interchain with G-Cter in SUMO2) linkage. Positions 840 to 842 match the KLHL15-binding motif; that stretch reads FRY. Thr847 is subject to Phosphothreonine; by CDK1. Thr859 is subject to Phosphothreonine; by ATR. A Glycyl lysine isopeptide (Lys-Gly) (interchain with G-Cter in SUMO2) cross-link involves residue Lys869. The interval 873–897 is disordered; the sequence is DPCPRPKRRQPYNAIFSPKGKEQKT.

Belongs to the COM1/SAE2/CtIP family. In terms of assembly, homotetramer; formed by antiparallel association of helical extensions protruding from the N-termini of two parallel coiled-coil dimers. Forms a dumbbell-shaped particle in which polar globular domains are held about 30 nm apart by a central rod. Homotetramerization is required for DNA-end resection and repair. Interacts (via the PXDLS motif) with CTBP1; the interaction is disrupted via binding of the adenovirus E1A to CTBP1. Component of the BRCA1-RBBP8 complex. Interacts (the Ser-327 phosphorylated form) with BRCA1 (via the C-terminal BRCT domains): the interaction occurs in the G2 phase, ubiquitinates RBBP8 and involves RBBP8 in BRCA1-dependent G2/M checkpoint control on DNA damage. Interacts with RB1. Interacts with the MRN complex; interacts directly with MRE11; the interaction is required for efficient homologous recombination (HR) and regulation of the MRN complex. Interacts directly with RAD50. Interacts (when phosphorylated by CDK1) with NBN; promoting association with the MRN complex. Interacts with LM04 (via the LIM zinc-binding 1 domain). Interacts with SIAH1. Interacts with RNF138. Interacts with EXD2. Interacts with CUL3 and KLHL15; this interaction leads to RBBP8 proteasomal degradation. Directly interacts with PIN1; this interaction depends upon RBBP8 phosphorylation, predominantly at Thr-315. Interacts with FZR1; this interaction leads to APC/C-mediated RBBP8 proteasomal degradation. Interacts with AUNIP; leading to recruitment of RBBP8 to sites of DNA damage. Interacts with SAMHD1. Interacts with HDGFL2. Hyperphosphorylation upon ionizing radiation results in dissociation from BRCA1. Phosphorylation at Thr-847 by CDK1 is essential for the recruitment to DNA and the DNA repair function. Phosphorylation at Thr-847 and Thr-859 promote interaction with NBN and recruitment to double-strand breaks (DSBs). Phosphorylated on Ser-327 as cells enter G2 phase. This phosphorylation is required for binding BRCA1 and for the G2/M DNA damage transition checkpoint control. Phosphorylation at Thr-315, probably catalyzed by CDK2, is required for PIN1-binding, while phosphorylation at Ser-276 serves as a PIN1 isomerization site. Phosphorylation at Thr-315 is cell-cycle dependent. It steadily increases during S phase, peaks at late S/G2 phase, and drops at G1. Phosphorylation is not required for tetramerization. Binds to DNA more strongly when dephosphorylated. Post-translationally, ubiquitinated. Ubiquitination at multiple sites by BRCA1 (via its N-terminal RING domain) does not lead to its proteasomal degradation but instead the ubiquitinated RBBP8 binds to chromatin following DNA damage and may play a role in G2/M checkpoint control. Ubiquitinated by RNF138 at its N-terminus. Ubiquitinated through 'Lys-48' by the E3 CUL3-KLHL15 complex; this modification leads to proteasomal degradation. Ubiquitinated by the E3 FZR1/APC/C complex; this modification leads to proteasomal degradation. As to expression, expressed in ER-positive breast cancer lines, but tends to be down-regulated ER-negative cells (at protein level).

It is found in the nucleus. Its subcellular location is the chromosome. Functionally, endonuclease that cooperates with the MRE11-RAD50-NBN (MRN) complex in DNA-end resection, the first step of double-strand break (DSB) repair through the homologous recombination (HR) pathway. HR is restricted to S and G2 phases of the cell cycle and preferentially repairs DSBs resulting from replication fork collapse. Key determinant of DSB repair pathway choice, as it commits cells to HR by preventing classical non-homologous end-joining (NHEJ). Specifically promotes the endonuclease activity of the MRN complex to clear DNA ends containing protein adducts: recruited to DSBs by NBN following phosphorylation by CDK1, and promotes the endonuclease activity of MRE11 to clear protein-DNA adducts and generate clean double-strand break ends. Functions downstream of the MRN complex and ATM, promotes ATR activation and its recruitment to DSBs in the S/G2 phase facilitating the generation of ssDNA. Component of the BRCA1-RBBP8 complex that regulates CHEK1 activation and controls cell cycle G2/M checkpoints on DNA damage. During immunoglobulin heavy chain class-switch recombination, promotes microhomology-mediated alternative end joining (A-NHEJ) and plays an essential role in chromosomal translocations. Binds preferentially to DNA Y-junctions and to DNA substrates with blocked ends and promotes intermolecular DNA bridging. The polypeptide is DNA endonuclease RBBP8 (RBBP8) (Homo sapiens (Human)).